A 464-amino-acid chain; its full sequence is Argininosuccinate lyase (464 aa).

Belongs to the lyase 1 family. Argininosuccinate lyase subfamily.

Its subcellular location is the cytoplasm. The enzyme catalyses 2-(N(omega)-L-arginino)succinate = fumarate + L-arginine. Its pathway is amino-acid biosynthesis; L-arginine biosynthesis; L-arginine from L-ornithine and carbamoyl phosphate: step 3/3. This chain is Argininosuccinate lyase, found in Pseudomonas aeruginosa (strain UCBPP-PA14).